Here is a 129-residue protein sequence, read N- to C-terminus: MKEVIDTVGRRKTSVARAFLTPGKGTVTVNKRPVEEYFKDEFKRQQALRPLTLCEKAEEFDVKINVQGGGLSGQSGAVSLAIARALTESDEALRAVLRTERLLTRDPRMVERKKFGRKKARKRFQFSKR.

This sequence belongs to the universal ribosomal protein uS9 family.

The protein is Small ribosomal subunit protein uS9 of Chlorobium chlorochromatii (strain CaD3).